Here is a 677-residue protein sequence, read N- to C-terminus: MTTYDTRTATDTRGSEQPGHVGTASYDANAITVLDGLDAVRKRPGMYIGSTGERGLHHLVQELVDNSVDEALAGVADRIDVTVLADGGVRVVDNGRGIPVGMHPVEKRPAVEVVLTVLHAGGKFGGGGYGVSGGLHGVGLSVVNALSTRLSAEIWTDGHRWTQDYRDGAPTAPLARHEATSRTGTSLTFWADGDIFETTEYSFETLARRHQEMAFLNGGLTLTLTDERSSARATAAVDEADSDPTAKTVSYRYDGGITDFVVHLNARKGEPAHPSVITIAAEDTERLLSAEIALQWNGQYTDSVYSYANAIHTHEGGTHEEGFRTALTTVVNRYAREKRLLRDKDANLSGEDIREGLTAIISVNVGEPQFEGQTKTKLGNTEVRTLLQKIVHEHLADWFDRNPNEAVDIVRKAVQAATARVAARKARDLTRRKGLLETAALPGKLSDCQSNDPATSEIFIVEGDSAGGSAKAGRNPQYQAILPIRGKILNVEKARIDKVLQNQENQALISAFGTGVHEDFDIAKLRYHKIILMADADVDGQHISTLLLTFLFRFMRPLVEEGHVHLSRPPLYKIKWSREHVEYAYSDRERNTLLERGRRDGRRIRDDSIQRFKGLGEMNAEELRVTTMDPDHRVLGQVTLDDAAFADDLFSVLMGEDVEARRHFIQRNAQDVRFLDI.

The tract at residues 1-23 is disordered; sequence MTTYDTRTATDTRGSEQPGHVGT. Positions 154–295 are novobiocin-binding; sequence IWTDGHRWTQ…RLLSAEIALQ (142 aa). The 115-residue stretch at 456 to 570 folds into the Toprim domain; sequence SEIFIVEGDS…EGHVHLSRPP (115 aa). Mg(2+) is bound by residues E462, D535, and D537.

The protein belongs to the type II topoisomerase GyrB family. In terms of assembly, heterotetramer, composed of two GyrA and two GyrB chains. In the heterotetramer, GyrA contains the active site tyrosine that forms a transient covalent intermediate with DNA, while GyrB binds cofactors and catalyzes ATP hydrolysis. The cofactor is Mg(2+). Mn(2+) serves as cofactor. It depends on Ca(2+) as a cofactor.

It is found in the cytoplasm. It catalyses the reaction ATP-dependent breakage, passage and rejoining of double-stranded DNA.. A type II topoisomerase that negatively supercoils closed circular double-stranded (ds) DNA in an ATP-dependent manner to modulate DNA topology and maintain chromosomes in an underwound state. Negative supercoiling favors strand separation, and DNA replication, transcription, recombination and repair, all of which involve strand separation. Also able to catalyze the interconversion of other topological isomers of dsDNA rings, including catenanes and knotted rings. Type II topoisomerases break and join 2 DNA strands simultaneously in an ATP-dependent manner. In Streptomyces niveus (Streptomyces spheroides), this protein is DNA gyrase subunit B, novobiocin-resistant.